The following is a 1153-amino-acid chain: Error-prone DNA polymerase (1153 aa).

Disordered regions lie at residues 1–39 (MFYS…QAQP) and 64–89 (VGEG…GASQ).

This sequence belongs to the DNA polymerase type-C family. DnaE2 subfamily.

It is found in the cytoplasm. The catalysed reaction is DNA(n) + a 2'-deoxyribonucleoside 5'-triphosphate = DNA(n+1) + diphosphate. DNA polymerase involved in damage-induced mutagenesis and translesion synthesis (TLS). It is not the major replicative DNA polymerase. This is Error-prone DNA polymerase from Corynebacterium jeikeium (strain K411).